The following is a 481-amino-acid chain: tRNA:m(4)X modification enzyme TRM13 homolog (481 aa).

At Ala-2 the chain carries N-acetylalanine. The segment at 56–83 adopts a CHHC U11-48K-type zinc-finger fold; the sequence is RILCPLDPKHTVYEDQLAKHLKKCNSRE. Zn(2+) is bound by residues Cys-59, His-65, His-75, and Cys-79. Residues 113–140 adopt a coiled-coil conformation; it reads SLSEEQLEKLIKKLRKASEGLNSTLKDH. The tract at residues 381–408 is disordered; the sequence is ETSNSTTKRQDNQNDDSEEHDDGGYRIT.

It belongs to the methyltransferase TRM13 family.

The enzyme catalyses cytidine(4) in tRNA(Pro) + S-adenosyl-L-methionine = 2'-O-methylcytidine(4) in tRNA(Pro) + S-adenosyl-L-homocysteine + H(+). The catalysed reaction is cytidine(4) in tRNA(Gly)(GCC) + S-adenosyl-L-methionine = 2'-O-methylcytidine(4) in tRNA(Gly)(GCC) + S-adenosyl-L-homocysteine + H(+). It carries out the reaction adenosine(4) in tRNA(His) + S-adenosyl-L-methionine = 2'-O-methyladenosine(4) in tRNA(His) + S-adenosyl-L-homocysteine + H(+). TRNA methylase which 2'-O-methylates cytidine(4) in tRNA(Pro) and tRNA(Gly)(GCC), and adenosine(4) in tRNA(His). The chain is tRNA:m(4)X modification enzyme TRM13 homolog (TRMT13) from Homo sapiens (Human).